Reading from the N-terminus, the 1123-residue chain is MDLGPGDAAGGGPLAPRPRRRRSLRRLFSRFLLALGSRSRPGDSPPRPQPGHCDGDGEGGFACAPGPVPAAPGSPGEERPPGPQPQLQLPAGDGARPPGAQGLKNHGNTCFMNAVVQCLSNTDLLAEFLALGRYRAAPGRAEVTEQLAALVRALWTREYTPQLSAEFKNAVSKYGSQFQGNSQHDALEFLLWLLDRVHEDLEGSSRGPVSEKLPPEATKTSENCLSPSAQLPLGQSFVQSHFQAQYRSSLTCPHCLKQSNTFDPFLCVSLPIPLRQTRFLSVTLVFPSKSQRFLRVGLAVPILSTVAALRKMVAEEGGVPADEVILVELYPSGFQRSFFDEEDLNTIAEGDNVYAFQVPPSPSQGTLSAHPLGLSASPRLAAREGQRFSLSLHSESKVLILFCNLVGSGQQASRFGPPFLIREDRAVSWAQLQQSILSKVRHLMKSEAPVQNLGSLFSIRVVGLSVACSYLSPKDSRPLCHWAVDRVLHLRRPGGPPHVKLAVEWDSSVKERLFGSLQEERAQDADSVWQQQQAHQQHSCTLDECFQFYTKEEQLAQDDAWKCPHCQVLQQGMVKLSLWTLPDILIIHLKRFCQVGERRNKLSTLVKFPLSGLNMAPHVAQRSTSPEAGLGPWPSWKQPDCLPTSYPLDFLYDLYAVCNHHGNLQGGHYTAYCRNSLDGQWYSYDDSTVEPLREDEVNTRGAYILFYQKRNSIPPWSASSSMRGSTSSSLSDHWLLRLGSHAGSTRGSLLSWSSAPCPSLPQVPDSPIFTNSLCNQEKGGLEPRRLVRGVKGRSISMKAPTTSRAKQGPFKTMPLRWSFGSKEKPPGASVELVEYLESRRRPRSTSQSIVSLLTGTAGEDEKSASPRSNVALPANSEDGGRAIERGPAGVPCPSAQPNHCLAPGNSDGPNTARKLKENAGQDIKLPRKFDLPLTVMPSVEHEKPARPEGQKAMNWKESFQMGSKSSPPSPYMGFSGNSKDSRRGTSELDRPLQGTLTLLRSVFRKKENRRNERAEVSPQVPPVSLVSGGLSPAMDGQAPGSPPALRIPEGLARGLGSRLERDVWSAPSSLRLPRKASRAPRGSALGMSQRTVPGEQASYGTFQRVKYHTLSLGRKKTLPESSF.

A disordered region spans residues 1–102 (MDLGPGDAAG…DGARPPGAQG (102 aa)). Basic residues predominate over residues 17–28 (RPRRRRSLRRLF). Over residues 29 to 39 (SRFLLALGSRS) the composition is skewed to low complexity. The USP domain occupies 101–710 (QGLKNHGNTC…GAYILFYQKR (610 aa)). Cysteine 110 (nucleophile) is an active-site residue. Positions 202–221 (EGSSRGPVSEKLPPEATKTS) are disordered. Histidine 668 acts as the Proton acceptor in catalysis. Arginine 746 bears the Asymmetric dimethylarginine mark. Disordered stretches follow at residues 795–826 (ISMK…EKPP), 854–886 (TGTA…IERG), 959–1049 (FQMG…RIPE), and 1068–1099 (SSLR…QASY). The residue at position 969 (serine 969) is a Phosphoserine. The segment covering 979 to 990 (KDSRRGTSELDR) has biased composition (basic and acidic residues). Low complexity predominate over residues 1016–1027 (VSPQVPPVSLVS). Serine 1041 carries the post-translational modification Phosphoserine.

The protein belongs to the peptidase C19 family. Expressed in brain, aorta and lung at low levels.

It catalyses the reaction Thiol-dependent hydrolysis of ester, thioester, amide, peptide and isopeptide bonds formed by the C-terminal Gly of ubiquitin (a 76-residue protein attached to proteins as an intracellular targeting signal).. Its function is as follows. May recognize and hydrolyze the peptide bond at the C-terminal Gly of ubiquitin. Involved in the processing of poly-ubiquitin precursors as well as that of ubiquitinated proteins. In Homo sapiens (Human), this protein is Ubiquitin carboxyl-terminal hydrolase 43 (USP43).